Here is a 430-residue protein sequence, read N- to C-terminus: L-lysine N6-monooxygenase MbtG (430 aa).

Residues 1–21 form the signal peptide; it reads MTATLAVIGAGPKAVAVAAKA.

Belongs to the lysine N(6)-hydroxylase/L-ornithine N(5)-oxygenase family. FAD is required as a cofactor.

It carries out the reaction L-lysine + NADPH + O2 = N(6)-hydroxy-L-lysine + NADP(+) + H2O. It functions in the pathway siderophore biosynthesis; mycobactin biosynthesis. In terms of biological role, flavoprotein monooxygenase required for N-hydroxylation of the two acylated lysine residues during mycobactin assembly, thus producing the hydroxamate groups necessary for iron sequestration. Is also able, but less efficiently, to hydroxylate L-lysine (non acylated) in vitro. This is L-lysine N6-monooxygenase MbtG (mbtG) from Mycobacterium sp. (strain MCS).